Here is a 120-residue protein sequence, read N- to C-terminus: Non-specific lipid-transfer protein 1 (120 aa).

Residues 1–25 (MARSMKLACVALVICMVVIAPMAEA) form the signal peptide. 4 disulfide bridges follow: Cys29-Cys78, Cys39-Cys55, Cys56-Cys101, and Cys76-Cys115. Residue Phe120 is a propeptide.

The protein belongs to the plant LTP family. Expressed in roots, stem, leaves and tendrils of the mature plant.

Its function is as follows. Plant non-specific lipid-transfer proteins transfer phospholipids as well as galactolipids across membranes. May play a role in wax or cutin deposition in the cell walls of expanding epidermal cells and certain secretory tissues. Binds saturated and unsaturated lipids, jasmonic acid and lysolipids. Has antifungal activity against A.niger VKM F-2259 (IC(50)=40 uM), F.oxysporum TCXA-4 (IC(50)=20-40), F.solani VKM F-142 (IC(50)=20-40 uM) and N.crassa VKM F-184 (IC(50)=40 uM). Has weak antibacterial activity against A.tumefaciens A281, C.michiganensis VKM Ac-1144 and P.syringae VKM B-1546. This is Non-specific lipid-transfer protein 1 from Pisum sativum (Garden pea).